Consider the following 190-residue polypeptide: NADH-quinone oxidoreductase subunit B (190 aa).

4 residues coordinate [4Fe-4S] cluster: Cys39, Cys40, Cys104, and Cys135.

Belongs to the complex I 20 kDa subunit family. In terms of assembly, NDH-1 is composed of 14 different subunits. Subunits NuoB, C, D, E, F, and G constitute the peripheral sector of the complex. Requires [4Fe-4S] cluster as cofactor.

The protein localises to the cell inner membrane. The catalysed reaction is a quinone + NADH + 5 H(+)(in) = a quinol + NAD(+) + 4 H(+)(out). Functionally, NDH-1 shuttles electrons from NADH, via FMN and iron-sulfur (Fe-S) centers, to quinones in the respiratory chain. The immediate electron acceptor for the enzyme in this species is believed to be a menaquinone. Couples the redox reaction to proton translocation (for every two electrons transferred, four hydrogen ions are translocated across the cytoplasmic membrane), and thus conserves the redox energy in a proton gradient. The chain is NADH-quinone oxidoreductase subunit B from Chlorobium chlorochromatii (strain CaD3).